The sequence spans 101 residues: Small ribosomal subunit protein uS14 (101 aa).

It belongs to the universal ribosomal protein uS14 family. In terms of assembly, part of the 30S ribosomal subunit. Contacts proteins S3 and S10.

In terms of biological role, binds 16S rRNA, required for the assembly of 30S particles and may also be responsible for determining the conformation of the 16S rRNA at the A site. The polypeptide is Small ribosomal subunit protein uS14 (Burkholderia ambifaria (strain MC40-6)).